Here is a 142-residue protein sequence, read N- to C-terminus: DNA-directed RNA polymerase II subunit RPB4 (142 aa).

It belongs to the eukaryotic RPB4 RNA polymerase subunit family. As to quaternary structure, component of the RNA polymerase II (Pol II) core complex consisting of 12 subunits: a ten-subunit catalytic core composed of POLR2A/RPB1, POLR2B/RPB2, POLR2C/RPB3, POLR2I/RPB9, POLR2J/RPB11, POLR2E/RPABC1, POLR2F/RPABC2, POLR2H/RPABC3, POLR2K/RPABC4 and POLR2L/RPABC5 and a mobile stalk composed of two subunits POLR2D/RPB4 and POLR2G/RPB7, protruding from the core and functioning primarily in transcription initiation. Part of Pol II(G) complex, in which Pol II core associates with an additional subunit POLR2M; unlike conventional Pol II, Pol II(G) functions as a transcriptional repressor. Part of Pol II pre-initiation complex (PIC), in which Pol II core assembles with Mediator, general transcription factors and other specific initiation factors including GTF2E1, GTF2E2, GTF2F1, GTF2F2, TCEA1, ERCC2, ERCC3, GTF2H2, GTF2H3, GTF2H4, GTF2H5, GTF2A1, GTF2A2, GTF2B and TBP; this large multi-subunit PIC complex mediates DNA unwinding and targets Pol II core to the transcription start site where the first phosphodiester bond forms.

It is found in the nucleus. Functionally, core component of RNA polymerase II (Pol II), a DNA-dependent RNA polymerase which synthesizes mRNA precursors and many functional non-coding RNAs using the four ribonucleoside triphosphates as substrates. Pol II is the central component of the basal RNA polymerase II transcription machinery. It is composed of mobile elements that move relative to each other. POLR2D/RPB4 is part of a subcomplex with POLR2G/RPB7 that binds to a pocket formed by POLR2A/RPB1, POLR2B/RPB2 and POLR2F/RPABC2 at the base of the clamp element. The POLR2D/RPB4-POLR2G/RPB7 subcomplex seems to lock the clamp via POLR2G/RPB7 in the closed conformation thus preventing double-stranded DNA to enter the active site cleft. The POLR2D/RPB4-POLR2G/RPB7 subcomplex binds single-stranded DNA and RNA. The chain is DNA-directed RNA polymerase II subunit RPB4 (POLR2D) from Bos taurus (Bovine).